A 445-amino-acid chain; its full sequence is Phosphoglucosamine mutase (445 aa).

Catalysis depends on serine 102, which acts as the Phosphoserine intermediate. Residues serine 102, aspartate 241, aspartate 243, and aspartate 245 each coordinate Mg(2+). A Phosphoserine modification is found at serine 102.

Belongs to the phosphohexose mutase family. Requires Mg(2+) as cofactor. Activated by phosphorylation.

It catalyses the reaction alpha-D-glucosamine 1-phosphate = D-glucosamine 6-phosphate. Catalyzes the conversion of glucosamine-6-phosphate to glucosamine-1-phosphate. This Hahella chejuensis (strain KCTC 2396) protein is Phosphoglucosamine mutase.